A 350-amino-acid chain; its full sequence is Uroporphyrinogen decarboxylase (350 aa).

Substrate is bound by residues 27–31 (RQAGR), phenylalanine 46, aspartate 76, tyrosine 152, serine 207, and histidine 321.

It belongs to the uroporphyrinogen decarboxylase family. Homodimer.

The protein resides in the cytoplasm. The enzyme catalyses uroporphyrinogen III + 4 H(+) = coproporphyrinogen III + 4 CO2. Its pathway is porphyrin-containing compound metabolism; protoporphyrin-IX biosynthesis; coproporphyrinogen-III from 5-aminolevulinate: step 4/4. Functionally, catalyzes the decarboxylation of four acetate groups of uroporphyrinogen-III to yield coproporphyrinogen-III. The sequence is that of Uroporphyrinogen decarboxylase from Listeria innocua serovar 6a (strain ATCC BAA-680 / CLIP 11262).